The following is a 322-amino-acid chain: 4-hydroxy-3-methylbut-2-enyl diphosphate reductase (322 aa).

Cys-15 contacts [4Fe-4S] cluster. (2E)-4-hydroxy-3-methylbut-2-enyl diphosphate contacts are provided by His-44 and His-77. Residues His-44 and His-77 each contribute to the dimethylallyl diphosphate site. 2 residues coordinate isopentenyl diphosphate: His-44 and His-77. [4Fe-4S] cluster is bound at residue Cys-99. Residue His-127 participates in (2E)-4-hydroxy-3-methylbut-2-enyl diphosphate binding. His-127 is a binding site for dimethylallyl diphosphate. His-127 contacts isopentenyl diphosphate. Glu-129 serves as the catalytic Proton donor. A (2E)-4-hydroxy-3-methylbut-2-enyl diphosphate-binding site is contributed by Thr-168. Residue Cys-198 coordinates [4Fe-4S] cluster. Positions 226, 227, 228, and 270 each coordinate (2E)-4-hydroxy-3-methylbut-2-enyl diphosphate. Dimethylallyl diphosphate contacts are provided by Ser-226, Ser-227, Asn-228, and Ser-270. Residues Ser-226, Ser-227, Asn-228, and Ser-270 each coordinate isopentenyl diphosphate.

It belongs to the IspH family. Requires [4Fe-4S] cluster as cofactor.

It carries out the reaction isopentenyl diphosphate + 2 oxidized [2Fe-2S]-[ferredoxin] + H2O = (2E)-4-hydroxy-3-methylbut-2-enyl diphosphate + 2 reduced [2Fe-2S]-[ferredoxin] + 2 H(+). It catalyses the reaction dimethylallyl diphosphate + 2 oxidized [2Fe-2S]-[ferredoxin] + H2O = (2E)-4-hydroxy-3-methylbut-2-enyl diphosphate + 2 reduced [2Fe-2S]-[ferredoxin] + 2 H(+). It participates in isoprenoid biosynthesis; dimethylallyl diphosphate biosynthesis; dimethylallyl diphosphate from (2E)-4-hydroxy-3-methylbutenyl diphosphate: step 1/1. Its pathway is isoprenoid biosynthesis; isopentenyl diphosphate biosynthesis via DXP pathway; isopentenyl diphosphate from 1-deoxy-D-xylulose 5-phosphate: step 6/6. Functionally, catalyzes the conversion of 1-hydroxy-2-methyl-2-(E)-butenyl 4-diphosphate (HMBPP) into a mixture of isopentenyl diphosphate (IPP) and dimethylallyl diphosphate (DMAPP). Acts in the terminal step of the DOXP/MEP pathway for isoprenoid precursor biosynthesis. This Neisseria gonorrhoeae (strain ATCC 700825 / FA 1090) protein is 4-hydroxy-3-methylbut-2-enyl diphosphate reductase.